The primary structure comprises 44 residues: Photosystem I reaction center subunit IX (44 aa).

Residues Tyr-7–Ile-27 form a helical membrane-spanning segment.

The protein belongs to the PsaJ family.

The protein resides in the plastid. It localises to the chloroplast thylakoid membrane. May help in the organization of the PsaE and PsaF subunits. This Piper cenocladum (Ant piper) protein is Photosystem I reaction center subunit IX.